Here is a 622-residue protein sequence, read N- to C-terminus: MSTDNKQSLPAITLAAIGVVYGDIGTSPLYTLRECLSGQFGFGVERDAVFGFLSLIFWLLIFVVSIKYLTFVMRADNAGEGGILTLMSLAGRNTSARTTSMLVIMGLIGGSFFYGEVVITPAISVMSAIEGLEIVAPQLDTWIVPLSIIVLTLLFMIQKHGTAMVGKLFAPIMLTWFLILAGLGLRSIIANQEVLYALNPMWAVHFFLEYKTVSFIALGAVVLSITGGEALYADMGHFGKFPIRLAWFTVVLPSLTLNYFGQGALLLKNPEAIKNPFFLLAPDWALIPLLIIAALATVIASQAVISGVFSLTRQAVRLGYLSPMRIIHTSEMESGQIYIPFVNWMLYVAVVIVIVSFEHSSNLAAAYGIAVTGTMVLTSILSTTVARQNWHWNKYFVALILIAFLCVDIPLFTANLDKLLSGGWLPLSLGTVMFIVMTTWKSERFRLLRRMHEHGNSLEAMIASLEKSPPVRVPGTAVYMSRAINVIPFALMHNLKHNKVLHERVILLTLRTEDAPYVHNVRRVQIEQLSPTFWRVVASYGWRETPNVEEVFHRCGLEGLSCRMMETSFFMSHESLILGKRPWYLRLRGKLYLLLQRNALRAPDQFEIPPNRVIELGTQVEI.

12 consecutive transmembrane segments (helical) span residues 9 to 29, 49 to 69, 103 to 123, 137 to 157, 165 to 185, 213 to 233, 247 to 267, 276 to 296, 337 to 357, 363 to 383, 396 to 416, and 419 to 439; these read LPAI…TSPL, VFGF…IKYL, VIMG…TPAI, PQLD…LFMI, VGKL…GLGL, VSFI…ALYA, WFTV…ALLL, PFFL…AALA, IYIP…IVSF, LAAA…ILST, FVAL…TANL, and LLSG…VMTT.

Belongs to the HAK/KUP transporter (TC 2.A.72) family.

The protein localises to the cell inner membrane. The enzyme catalyses K(+)(in) + H(+)(in) = K(+)(out) + H(+)(out). Its function is as follows. Responsible for the low-affinity transport of potassium into the cell. Likely operates as a K(+):H(+) symporter. The sequence is that of Low affinity potassium transport system protein Kup from Escherichia coli O157:H7 (strain EC4115 / EHEC).